We begin with the raw amino-acid sequence, 588 residues long: 2-isopropylmalate synthase (588 aa).

The Pyruvate carboxyltransferase domain maps to 40–314; sequence PRWCAVDLRD…DPQIDFSDLD (275 aa). Residues Asp-49, His-253, His-255, and Asn-289 each coordinate Mg(2+). Residues 456–588 form a regulatory domain region; it reads APLDRVEEKW…TVREPELAAV (133 aa).

Belongs to the alpha-IPM synthase/homocitrate synthase family. LeuA type 2 subfamily. Homodimer. It depends on Mg(2+) as a cofactor.

The protein localises to the cytoplasm. It catalyses the reaction 3-methyl-2-oxobutanoate + acetyl-CoA + H2O = (2S)-2-isopropylmalate + CoA + H(+). It participates in amino-acid biosynthesis; L-leucine biosynthesis; L-leucine from 3-methyl-2-oxobutanoate: step 1/4. Catalyzes the condensation of the acetyl group of acetyl-CoA with 3-methyl-2-oxobutanoate (2-ketoisovalerate) to form 3-carboxy-3-hydroxy-4-methylpentanoate (2-isopropylmalate). This chain is 2-isopropylmalate synthase, found in Clavibacter sepedonicus (Clavibacter michiganensis subsp. sepedonicus).